Here is a 273-residue protein sequence, read N- to C-terminus: MGRRACCAKEGVKRGAWTSKEDDALAAYVKAHGEGKWREVPQKAGLRRCGKSCRLRWLNYLRPNIRRGNISYDEEDLIIRLHRLLGNRWSLIAGRLPGRTDNEIKNYWNSTLGRRAGAGAGAGGSWVVVAPDTGSHATPAATSGACETGQNSAAHRADPDSAGTTTTSAAAVWAPKAVRCTGGLFFFHRDTTPAHAGETATPMAGGGGGGGGEAGSSDDCSSAASVSLRVGSHDEPCFSGDGDGDWMDDVRALASFLESDEDWLRCQTAGQLA.

HTH myb-type domains lie at 9–65 (KEGV…RPNI) and 66–116 (RRGN…GRRA). 2 consecutive DNA-binding regions (H-T-H motif) follow at residues 37–61 (WREV…LNYL) and 89–112 (WSLI…NSTL). Disordered stretches follow at residues 137–164 (ATPA…SAGT) and 196–220 (AGET…SDDC). Over residues 204–214 (AGGGGGGGGEA) the composition is skewed to gly residues.

The protein localises to the nucleus. Functionally, controls the expression of genes involved in anthocyanin biosynthesis. Regulates the expression of at least 3 structural genes: chalcone synthase, dihydroflavonol reductase and flavonol O(3) glucosyltransferase. C1 acts as a trans-acting factor. The sequence is that of Anthocyanin regulatory C1 protein (C1) from Zea mays (Maize).